Reading from the N-terminus, the 425-residue chain is Dihydroorotase (425 aa).

Zn(2+)-binding residues include His-56 and His-58. Substrate contacts are provided by residues 58-60 (HYR) and Asn-90. Residues Asp-148, His-175, and His-228 each coordinate Zn(2+). Asn-274 is a binding site for substrate. Position 301 (Asp-301) interacts with Zn(2+). Residue Asp-301 is part of the active site. Residues His-305 and 319–320 (FG) each bind substrate.

The protein belongs to the metallo-dependent hydrolases superfamily. DHOase family. Class I DHOase subfamily. Zn(2+) serves as cofactor.

It carries out the reaction (S)-dihydroorotate + H2O = N-carbamoyl-L-aspartate + H(+). It functions in the pathway pyrimidine metabolism; UMP biosynthesis via de novo pathway; (S)-dihydroorotate from bicarbonate: step 3/3. Functionally, catalyzes the reversible cyclization of carbamoyl aspartate to dihydroorotate. This Lactobacillus johnsonii (strain CNCM I-12250 / La1 / NCC 533) protein is Dihydroorotase.